The primary structure comprises 234 residues: Leucyl/phenylalanyl-tRNA--protein transferase (234 aa).

This sequence belongs to the L/F-transferase family.

The protein resides in the cytoplasm. The catalysed reaction is N-terminal L-lysyl-[protein] + L-leucyl-tRNA(Leu) = N-terminal L-leucyl-L-lysyl-[protein] + tRNA(Leu) + H(+). It catalyses the reaction N-terminal L-arginyl-[protein] + L-leucyl-tRNA(Leu) = N-terminal L-leucyl-L-arginyl-[protein] + tRNA(Leu) + H(+). The enzyme catalyses L-phenylalanyl-tRNA(Phe) + an N-terminal L-alpha-aminoacyl-[protein] = an N-terminal L-phenylalanyl-L-alpha-aminoacyl-[protein] + tRNA(Phe). Functions in the N-end rule pathway of protein degradation where it conjugates Leu, Phe and, less efficiently, Met from aminoacyl-tRNAs to the N-termini of proteins containing an N-terminal arginine or lysine. This Pseudoalteromonas atlantica (strain T6c / ATCC BAA-1087) protein is Leucyl/phenylalanyl-tRNA--protein transferase.